Consider the following 132-residue polypeptide: Ribosome-binding factor A (132 aa).

Residues 113-132 (EANSTRAKDDDEADTPAKDD) are disordered.

The protein belongs to the RbfA family. In terms of assembly, monomer. Binds 30S ribosomal subunits, but not 50S ribosomal subunits or 70S ribosomes.

Its subcellular location is the cytoplasm. In terms of biological role, one of several proteins that assist in the late maturation steps of the functional core of the 30S ribosomal subunit. Associates with free 30S ribosomal subunits (but not with 30S subunits that are part of 70S ribosomes or polysomes). Required for efficient processing of 16S rRNA. May interact with the 5'-terminal helix region of 16S rRNA. The polypeptide is Ribosome-binding factor A (Burkholderia cenocepacia (strain HI2424)).